Here is a 1213-residue protein sequence, read N- to C-terminus: DNA-directed RNA polymerase subunit beta (1213 aa).

The segment at 1153–1213 (RDMDEDSSEH…ADESDGKVSK (61 aa)) is disordered. The segment covering 1171-1198 (MAEEQEKKKLAEETGKSENKEDSNETAD) has biased composition (basic and acidic residues).

Belongs to the RNA polymerase beta chain family. In terms of assembly, the RNAP catalytic core consists of 2 alpha, 1 beta, 1 beta' and 1 omega subunit. When a sigma factor is associated with the core the holoenzyme is formed, which can initiate transcription.

It catalyses the reaction RNA(n) + a ribonucleoside 5'-triphosphate = RNA(n+1) + diphosphate. In terms of biological role, DNA-dependent RNA polymerase catalyzes the transcription of DNA into RNA using the four ribonucleoside triphosphates as substrates. The polypeptide is DNA-directed RNA polymerase subunit beta (Lactobacillus acidophilus (strain ATCC 700396 / NCK56 / N2 / NCFM)).